The following is a 241-amino-acid chain: Phosphoglycolate phosphatase (241 aa).

The active-site Nucleophile is Asp8. 3 residues coordinate Mg(2+): Asp8, Asp10, and Asp174.

This sequence belongs to the HAD-like hydrolase superfamily. CbbY/CbbZ/Gph/YieH family. It depends on Mg(2+) as a cofactor.

It carries out the reaction 2-phosphoglycolate + H2O = glycolate + phosphate. It participates in organic acid metabolism; glycolate biosynthesis; glycolate from 2-phosphoglycolate: step 1/1. Specifically catalyzes the dephosphorylation of 2-phosphoglycolate. Is involved in the dissimilation of the intracellular 2-phosphoglycolate formed during the DNA repair of 3'-phosphoglycolate ends, a major class of DNA lesions induced by oxidative stress. In Rhodospirillum rubrum (strain ATCC 11170 / ATH 1.1.1 / DSM 467 / LMG 4362 / NCIMB 8255 / S1), this protein is Phosphoglycolate phosphatase.